The sequence spans 854 residues: Armadillo repeat-containing protein 2 (854 aa).

3 disordered regions span residues 1-116 (MLSS…SFPK), 140-194 (QGML…PLLT), and 206-255 (EVSL…ETDT). Residues 58–73 (PASSRSPENRPPSSFS) show a composition bias toward low complexity. Polar residues-rich tracts occupy residues 74 to 87 (LHAS…SKPI) and 162 to 187 (KPVS…TGQL). ARM repeat units lie at residues 255-294 (TEVD…RTLE), 298-337 (MLGK…ALKV), 356-396 (EKND…ALKF), 401-442 (PGFL…HLLV), 455-496 (PLTR…KLTS), 499-540 (DCCA…NLTA), 544-583 (QARE…EAKP), 585-605 (AEAE…AIHP), 606-649 (RIGP…NLSF), 651-692 (QVKS…NLSQ), 694-733 (HDVC…NLTV), and 735-777 (KEKR…NFSE).

Required for sperm flagellum axoneme organization and function. Involved in axonemal central pair complex assembly and/or stability. This is Armadillo repeat-containing protein 2 from Mus musculus (Mouse).